Consider the following 768-residue polypeptide: Solute carrier family 45 member 4 (768 aa).

A disordered region spans residues M1–E32. A run of 6 helical transmembrane segments spans residues E63–P83, Y86–G106, I123–I143, P155–T175, L196–L216, and V233–I253. 2 disordered regions span residues S259–P284 and N379–F419. Phosphoserine is present on residues S424 and S454. Residues D460–E489 form a disordered region. Over residues Q473 to D482 the composition is skewed to low complexity. A Phosphoserine modification is found at S485. Helical transmembrane passes span T518–F538, M560–Q580, V592–P612, V614–C634, I666–V686, and I695–I715. Residues E726–V768 are disordered. S732 carries the post-translational modification Phosphoserine.

It belongs to the glycoside-pentoside-hexuronide (GPH) cation symporter transporter (TC 2.A.2) family.

Its subcellular location is the membrane. It catalyses the reaction sucrose(out) + H(+)(out) = sucrose(in) + H(+)(in). Its function is as follows. Proton-associated sucrose transporter. May be able to transport also glucose and fructose. The protein is Solute carrier family 45 member 4 of Homo sapiens (Human).